Here is a 712-residue protein sequence, read N- to C-terminus: Polyribonucleotide nucleotidyltransferase (712 aa).

Residues D487 and D493 each contribute to the Mg(2+) site. Positions 554-613 (PKIITMTINPDKIRDVIGPSGKQINKIIEETGVKIDIEQDGTVFISSINQEMNDKAKKII) constitute a KH domain. Positions 623 to 691 (GEIYEGKVKR…KQGRVNLSRK (69 aa)) constitute an S1 motif domain.

This sequence belongs to the polyribonucleotide nucleotidyltransferase family. Requires Mg(2+) as cofactor.

Its subcellular location is the cytoplasm. The catalysed reaction is RNA(n+1) + phosphate = RNA(n) + a ribonucleoside 5'-diphosphate. Involved in mRNA degradation. Catalyzes the phosphorolysis of single-stranded polyribonucleotides processively in the 3'- to 5'-direction. The protein is Polyribonucleotide nucleotidyltransferase of Bacillus anthracis (strain CDC 684 / NRRL 3495).